The sequence spans 822 residues: BDNF/NT-3 growth factors receptor (822 aa).

The signal sequence occupies residues 1 to 31; sequence MSSWIRWHGPAMARLWGFCWLVVGFWRAAFA. Disulfide bonds link C32–C38 and C36–C45. Residues 32–61 form the LRRNT domain; it reads CPTSCKCSASRIWCSDPSPGIVAFPRLEPN. The Extracellular segment spans residues 32–430; it reads CPTSCKCSAS…DVTDKTGREH (399 aa). 3 N-linked (GlcNAc...) asparagine glycosylation sites follow: N67, N95, and N121. 2 LRR repeats span residues 92–113 and 116–137; these read GLRNLTIVDSGLKFVAHKAFLK and NLQHINFTRNKLTSLSRKHFRH. The 49-residue stretch at 148–196 folds into the LRRCT domain; it reads NPFTCSCDIMWIKTLQEAKSSPDTQDLYCLNESSKNIPLANLQIPNCGL. 2 cysteine pairs are disulfide-bonded: C152/C176 and C154/C194. N-linked (GlcNAc...) asparagine glycosylation is found at N178, N205, N241, N254, N280, N325, N338, and N412. 2 Ig-like C2-type domains span residues 197–282 and 295–365; these read PSAN…VNLT and PTSD…IAKN. Residues C218 and C266 are joined by a disulfide bond. C302 and C345 are joined by a disulfide. A helical transmembrane segment spans residues 431–454; it reads LSVYAVVVIASVVGFCLLVMLFLL. The tract at residues 455–466 is interaction with MAPK8IP3/JIP3; it reads KLARHSKFGMKG. Over 455–822 the chain is Cytoplasmic; that stretch reads KLARHSKFGM…ASPVYLDILG (368 aa). The disordered stretch occupies residues 475–498; the sequence is DDSASPLHHISNGSNTPSSSEGGP. A compositionally biased stretch (polar residues) spans 485–495; sequence SNGSNTPSSSE. Y516 carries the phosphotyrosine; by autocatalysis modification. The 270-residue stretch at 538 to 807 folds into the Protein kinase domain; sequence IVLKRELGEG…KNIKGIHTLL (270 aa). ATP-binding positions include 544 to 552 and K572; that span reads LGEGAFGKV. The active-site Proton acceptor is the D676. Phosphotyrosine; by autocatalysis is present on residues Y702, Y706, Y707, and Y817.

This sequence belongs to the protein kinase superfamily. Tyr protein kinase family. Insulin receptor subfamily. As to quaternary structure, exists in a dynamic equilibrium between monomeric (low affinity) and dimeric (high affinity) structures. Interacts (phosphorylated upon activation by BDNF) with SHC1; mediates SHC1 phosphorylation and activation. Interacts (phosphorylated upon activation by BDNF) with PLCG1 and/or PLCG2; mediates PLCG1 phosphorylation and activation. Interacts with SH2B1 and SH2B2. Interacts with NGFR; may regulate the ligand specificity of the receptor. Interacts with SORCS2; this interaction is important for normal targeting to post-synaptic densities in response to high-frequency stimulation. Interacts (phosphorylated upon ligand-binding) with SH2D1A; regulates NTRK2. Interacts with SQSTM1 and KIDINS220. Interacts (phosphorylated upon ligand-binding) with FRS2; activates the MAPK signaling pathway. Interacts with APPL1. Interacts with MAPK8IP3/JIP3 and KLC1; interaction with KLC1 is mediated by MAPK8IP3/JIP3. Interacts with SORL1; this interaction facilitates NTRK2 trafficking between synaptic plasma membranes, postsynaptic densities and cell soma, hence positively regulates BDNF signaling. Interacts with SLITRK2. Phosphorylated. Undergoes ligand-mediated autophosphorylation that is required for interaction with SHC1 and PLCG1 and other downstream effectors. Isoform TrkB-T-Shc is not phosphorylated. In terms of processing, ubiquitinated. Undergoes polyubiquitination upon activation; regulated by NGFR. Ubiquitination regulates the internalization of the receptor. As to expression, isoform TrkB is expressed in the central and peripheral nervous system. In the central nervous system (CNS), expression is observed in the cerebral cortex, hippocampus, thalamus, choroid plexus, granular layer of the cerebellum, brain stem, and spinal cord. In the peripheral nervous system, it is expressed in many cranial ganglia, the ophthalmic nerve, the vestibular system, multiple facial structures, the submaxillary glands, and dorsal root ganglia. Isoform TrkB-T1 is mainly expressed in the brain but also detected in other tissues including pancreas, kidney and heart. Isoform TrkB-T-Shc is predominantly expressed in the brain.

The protein localises to the cell membrane. It localises to the endosome membrane. It is found in the early endosome membrane. Its subcellular location is the cell projection. The protein resides in the axon. The protein localises to the dendrite. It localises to the cytoplasm. It is found in the perinuclear region. Its subcellular location is the postsynaptic density. It catalyses the reaction L-tyrosyl-[protein] + ATP = O-phospho-L-tyrosyl-[protein] + ADP + H(+). The neuronal activity and the influx of calcium positively regulate the kinase activity and the internalization of the receptor which are both important for active signaling. Regulated by NGFR that may control the internalization of the receptor. NGFR may also stimulate the activation by BDNF compared to NTF3 and NTF4. SH2D1A inhibits the autophosphorylation of the receptor, and alters the recruitment and activation of downstream effectors and signaling cascades. The formation of active receptors dimers able to fully transduce the ligand-mediated signal, may be negatively regulated by the formation of inactive heterodimers with the non-catalytic isoforms. In terms of biological role, receptor tyrosine kinase involved in the development and the maturation of the central and the peripheral nervous systems through regulation of neuron survival, proliferation, migration, differentiation, and synapse formation and plasticity. Receptor for BDNF/brain-derived neurotrophic factor and NTF4/neurotrophin-4. Alternatively can also bind NTF3/neurotrophin-3 which is less efficient in activating the receptor but regulates neuron survival through NTRK2. Upon ligand-binding, undergoes homodimerization, autophosphorylation and activation. Recruits, phosphorylates and/or activates several downstream effectors including SHC1, FRS2, SH2B1, SH2B2 and PLCG1 that regulate distinct overlapping signaling cascades. Through SHC1, FRS2, SH2B1, SH2B2 activates the GRB2-Ras-MAPK cascade that regulates for instance neuronal differentiation including neurite outgrowth. Through the same effectors controls the Ras-PI3 kinase-AKT1 signaling cascade that mainly regulates growth and survival. Through PLCG1 and the downstream protein kinase C-regulated pathways controls synaptic plasticity. Thereby, plays a role in learning and memory by regulating both short term synaptic function and long-term potentiation. PLCG1 also leads to NF-Kappa-B activation and the transcription of genes involved in cell survival. Hence, it is able to suppress anoikis, the apoptosis resulting from loss of cell-matrix interactions. May also play a role in neutrophin-dependent calcium signaling in glial cells and mediate communication between neurons and glia. This is BDNF/NT-3 growth factors receptor (NTRK2) from Homo sapiens (Human).